Consider the following 878-residue polypeptide: Alanine--tRNA ligase (878 aa).

Zn(2+) contacts are provided by His567, His571, Cys669, and His673.

It belongs to the class-II aminoacyl-tRNA synthetase family. Zn(2+) is required as a cofactor.

Its subcellular location is the cytoplasm. The enzyme catalyses tRNA(Ala) + L-alanine + ATP = L-alanyl-tRNA(Ala) + AMP + diphosphate. Catalyzes the attachment of alanine to tRNA(Ala) in a two-step reaction: alanine is first activated by ATP to form Ala-AMP and then transferred to the acceptor end of tRNA(Ala). Also edits incorrectly charged Ser-tRNA(Ala) and Gly-tRNA(Ala) via its editing domain. The protein is Alanine--tRNA ligase of Rickettsia canadensis (strain McKiel).